The following is a 242-amino-acid chain: MTTLFISDLHLTPSRPDITECFITFMRTEAKNAEALYVLGDLFEFWVGDDDKTPFANQIRTEFKALTDQGVPVFFIQGNRDFLLGERFCKETGITLLDDVCTIDLYGTKAVILHGDTLCIDDVEYQKFRKTVHQPWLQWIFKRIPWYLKKKIVSKVQSDIRDDKQMKSLDIMDVNQSEVEKVMSQNCVNLMIHGHTHRPNTHFFDANGAKNTRIVLGDWYTQGSVLQVNSDGFELQNRPFNT.

Residues D8, H10, D41, N79, and H114 each coordinate Mn(2+). Position 79 to 80 (79 to 80 (NR)) interacts with substrate. The substrate site is built by D122, K164, K167, and H195. Residues H195 and H197 each contribute to the Mn(2+) site.

The protein belongs to the LpxH family. It depends on Mn(2+) as a cofactor.

The protein localises to the cell inner membrane. The catalysed reaction is UDP-2-N,3-O-bis[(3R)-3-hydroxytetradecanoyl]-alpha-D-glucosamine + H2O = 2-N,3-O-bis[(3R)-3-hydroxytetradecanoyl]-alpha-D-glucosaminyl 1-phosphate + UMP + 2 H(+). Its pathway is glycolipid biosynthesis; lipid IV(A) biosynthesis; lipid IV(A) from (3R)-3-hydroxytetradecanoyl-[acyl-carrier-protein] and UDP-N-acetyl-alpha-D-glucosamine: step 4/6. Hydrolyzes the pyrophosphate bond of UDP-2,3-diacylglucosamine to yield 2,3-diacylglucosamine 1-phosphate (lipid X) and UMP by catalyzing the attack of water at the alpha-P atom. Involved in the biosynthesis of lipid A, a phosphorylated glycolipid that anchors the lipopolysaccharide to the outer membrane of the cell. This Vibrio parahaemolyticus serotype O3:K6 (strain RIMD 2210633) protein is UDP-2,3-diacylglucosamine hydrolase.